Here is a 120-residue protein sequence, read N- to C-terminus: Large ribosomal subunit protein uL18 (120 aa).

The protein belongs to the universal ribosomal protein uL18 family. As to quaternary structure, part of the 50S ribosomal subunit; part of the 5S rRNA/L5/L18/L25 subcomplex. Contacts the 5S and 23S rRNAs.

In terms of biological role, this is one of the proteins that bind and probably mediate the attachment of the 5S RNA into the large ribosomal subunit, where it forms part of the central protuberance. This is Large ribosomal subunit protein uL18 from Bacillus cereus (strain ATCC 10987 / NRS 248).